A 159-amino-acid chain; its full sequence is Cyclic pyranopterin monophosphate synthase (159 aa).

Substrate contacts are provided by residues 75–77 and 113–114; these read LCH and ME. Residue Asp-128 is part of the active site.

This sequence belongs to the MoaC family. In terms of assembly, homohexamer; trimer of dimers.

The catalysed reaction is (8S)-3',8-cyclo-7,8-dihydroguanosine 5'-triphosphate = cyclic pyranopterin phosphate + diphosphate. It participates in cofactor biosynthesis; molybdopterin biosynthesis. Functionally, catalyzes the conversion of (8S)-3',8-cyclo-7,8-dihydroguanosine 5'-triphosphate to cyclic pyranopterin monophosphate (cPMP). The chain is Cyclic pyranopterin monophosphate synthase from Vibrio vulnificus (strain YJ016).